Consider the following 318-residue polypeptide: Aspartate carbamoyltransferase catalytic subunit (318 aa).

R58 and T59 together coordinate carbamoyl phosphate. K86 contributes to the L-aspartate binding site. Carbamoyl phosphate contacts are provided by R108, H141, and Q144. Residues R174 and R226 each contribute to the L-aspartate site. Carbamoyl phosphate-binding residues include G270 and P271.

It belongs to the aspartate/ornithine carbamoyltransferase superfamily. ATCase family. In terms of assembly, heterododecamer (2C3:3R2) of six catalytic PyrB chains organized as two trimers (C3), and six regulatory PyrI chains organized as three dimers (R2).

It catalyses the reaction carbamoyl phosphate + L-aspartate = N-carbamoyl-L-aspartate + phosphate + H(+). It functions in the pathway pyrimidine metabolism; UMP biosynthesis via de novo pathway; (S)-dihydroorotate from bicarbonate: step 2/3. In terms of biological role, catalyzes the condensation of carbamoyl phosphate and aspartate to form carbamoyl aspartate and inorganic phosphate, the committed step in the de novo pyrimidine nucleotide biosynthesis pathway. This Lactobacillus gasseri (strain ATCC 33323 / DSM 20243 / BCRC 14619 / CIP 102991 / JCM 1131 / KCTC 3163 / NCIMB 11718 / NCTC 13722 / AM63) protein is Aspartate carbamoyltransferase catalytic subunit.